A 131-amino-acid chain; its full sequence is Small ribosomal subunit protein eS24 (131 aa).

Met-1 carries the post-translational modification N-acetylmethionine. Thr-9 is subject to Phosphothreonine. A Glycyl lysine isopeptide (Lys-Gly) (interchain with G-Cter in SUMO2) cross-link involves residue Lys-37. The segment covering 90-100 (RLARHGLYEKK) has biased composition (basic and acidic residues). Residues 90–131 (RLARHGLYEKKKTSRKQRKERKNRMKKVRGTAKANVGAGKKK) are disordered. A compositionally biased stretch (basic residues) spans 101–119 (KTSRKQRKERKNRMKKVRG).

Belongs to the eukaryotic ribosomal protein eS24 family. In terms of assembly, component of the small ribosomal subunit. Part of the small subunit (SSU) processome, composed of more than 70 proteins and the RNA chaperone small nucleolar RNA (snoRNA) U3.

It localises to the cytoplasm. Its subcellular location is the nucleus. The protein localises to the nucleolus. Functionally, component of the small ribosomal subunit. The ribosome is a large ribonucleoprotein complex responsible for the synthesis of proteins in the cell. Required for processing of pre-rRNA and maturation of 40S ribosomal subunits. Part of the small subunit (SSU) processome, first precursor of the small eukaryotic ribosomal subunit. During the assembly of the SSU processome in the nucleolus, many ribosome biogenesis factors, an RNA chaperone and ribosomal proteins associate with the nascent pre-rRNA and work in concert to generate RNA folding, modifications, rearrangements and cleavage as well as targeted degradation of pre-ribosomal RNA by the RNA exosome. The polypeptide is Small ribosomal subunit protein eS24 (RPS24) (Macaca fascicularis (Crab-eating macaque)).